Consider the following 353-residue polypeptide: Endophilin-A3 (353 aa).

The interval Met1–Ile21 is membrane-binding amphipathic helix. Residues Ser18 to Ser249 enclose the BAR domain. The interval Pro60–Pro87 is required for dimerization upon membrane association. The stretch at Asp180–Met201 forms a coiled coil. The segment at Phe218–Glu254 is interaction with ARC. The region spanning Val291–Pro350 is the SH3 domain.

Belongs to the endophilin family. As to quaternary structure, interacts with ARC. Interacts with SYNJ1 and DNM1. In terms of tissue distribution, highest level in a region associated with endocytosis of yolk proteins in developing oocytes (at protein level). Highest level in small ovarian follicles. High levels in brain and testis. Lower level in adrenal glands.

It is found in the cytoplasm. The protein localises to the early endosome membrane. Implicated in endocytosis. May recruit other proteins to membranes with high curvature. Implicated in endocytosis of yolk proteins during oogenesis. The polypeptide is Endophilin-A3 (Gallus gallus (Chicken)).